The following is a 428-amino-acid chain: MTRRRSALASWLLLSLLGVAASLEVSESPGSVQVARGQTAVLPCAFSTSAALLNLNVIWMVIPLSNANQPEQVILYQGGQMFDGALRFHGRVGFTGTMPATNVSIFINNTQLSDTGTYQCLVNNLPDRGGRNIGVTGLTVLVPPSAPNCQIQGSQDIGSDVILLCSSEEGIPRPTYLWEKLDNTLKLPPTATQDQVQGTVTIRNISALSSGLYQCVASNAIGTSTCLLDLQVISPQPRSVGVIAGAVGTGAVLIVICLALTSGAFFYWRSKNKEEEEEEIPNEIREDDLPPKCSSAKAFHTEISSSENNTLTSSNTYNSRYWNNNPKPHKNTESFNHFSDLRQSFSGNAVIPSIYANGNHLVLGPHKTLVVTANRGSSPQVMPRNNGSVSRKPWSQHTHSYTVSQMTLERIGAVPVMVPAQSRAGSLV.

The N-terminal stretch at 1 to 22 (MTRRRSALASWLLLSLLGVAAS) is a signal peptide. An Ig-like V-type domain is found at 23-136 (LEVSESPGSV…DRGGRNIGVT (114 aa)). Over 23–239 (LEVSESPGSV…LQVISPQPRS (217 aa)) the chain is Extracellular. 2 disulfides stabilise this stretch: cysteine 44-cysteine 120 and cysteine 165-cysteine 215. The N-linked (GlcNAc...) asparagine glycan is linked to asparagine 102. The 91-residue stretch at 144 to 234 (PSAPNCQIQG…TCLLDLQVIS (91 aa)) folds into the Ig-like C2-type domain. Residues 240 to 260 (VGVIAGAVGTGAVLIVICLAL) traverse the membrane as a helical segment. Over 261 to 428 (TSGAFFYWRS…PAQSRAGSLV (168 aa)) the chain is Cytoplasmic. The residue at position 375 (arginine 375) is an Omega-N-methylarginine.

Post-translationally, N-glycosylated.

Its subcellular location is the cell membrane. Functions as a cell adhesion molecule through homophilic interaction. Stimulates cell growth. This Rattus norvegicus (Rat) protein is Immunoglobulin superfamily member 11 (Igsf11).